Reading from the N-terminus, the 257-residue chain is uncharacterized protein (257 aa).

Positions methionine 1–alanine 22 are cleaved as a signal peptide. Residue cysteine 23 is the site of N-palmitoyl cysteine attachment. Cysteine 23 is lipidated: S-diacylglycerol cysteine.

It belongs to the staphylococcal tandem lipoprotein family.

Its subcellular location is the cell membrane. This is an uncharacterized protein from Staphylococcus aureus (strain Mu50 / ATCC 700699).